Consider the following 1276-residue polypeptide: Component of gems protein 5 (1276 aa).

The interaction with U4 snRNA stretch occupies residues 53-55 (NWY). WD repeat units follow at residues 92–139 (GHTD…DDHN), 183–223 (EHKA…VFPI), 228–268 (GNNI…TVCK), 271–336 (AHSA…IESG), 364–405 (NDKQ…SPPE), 438–481 (TTKN…IKIQ), 485–522 (GFVY…KDAY), and 530–574 (GIQS…SKIF). A disordered region spans residues 138-157 (HNEDTEIGDDFKHGSGGGGS). Residues 586-652 (IWKPPPTPTP…NSNNEQQPNK (67 aa)) are disordered. The span at 598-646 (NINNNNNNNNNNNNNNNNNNNNNNNNNNNNNNNNNNNNINNNNNNNSNN) shows a compositional bias: low complexity. WD repeat units lie at residues 688–727 (TFSK…LTRI) and 729–771 (EHKK…NQNE). The span at 772 to 793 (NEKKIDNEKGKENENEKGKENE) shows a compositional bias: basic and acidic residues. The segment at 772–809 (NEKKIDNEKGKENENEKGKENENENENENENENENENE) is disordered. A coiled-coil region spans residues 778 to 829 (NEKGKENENEKGKENENENENENENENENENENEIENIVNNNNENDTEIEIK). Residues 794 to 809 (NENENENENENENENE) are compositionally biased toward acidic residues. WD repeat units lie at residues 863 to 903 (GHKN…AISN) and 906 to 946 (GHDG…FKTV). The disordered stretch occupies residues 967 to 997 (ITEQQQQQQQPQSPIKSNPDQSNNPSLVPPI). Residues 979 to 992 (SPIKSNPDQSNNPS) are compositionally biased toward polar residues.

Belongs to the WD repeat gemin-5 family. Part of the core SMN complex.

Its subcellular location is the nucleus. It is found in the nucleoplasm. The protein resides in the gem. The protein localises to the cytoplasm. In terms of biological role, the SMN complex catalyzes the assembly of small nuclear ribonucleoproteins (snRNPs), the building blocks of the spliceosome, and thereby plays an important role in the splicing of cellular pre-mRNAs. Most spliceosomal snRNPs contain a common set of Sm proteins SNRPB, SNRPD1, SNRPD2, SNRPD3, SNRPE, SNRPF and SNRPG that assemble in a heptameric protein ring on the Sm site of the small nuclear RNA to form the core snRNP (Sm core). In the cytosol, the Sm proteins SNRPD1, SNRPD2, SNRPE, SNRPF and SNRPG are trapped in an inactive 6S pICln-Sm complex by the chaperone CLNS1A that controls the assembly of the core snRNP. To assemble core snRNPs, the SMN complex accepts the trapped 5Sm proteins from CLNS1A forming an intermediate. Binding of snRNA inside 5Sm ultimately triggers eviction of the SMN complex, thereby allowing binding of SNRPD3 and SNRPB to complete assembly of the core snRNP. Within the SMN complex, GEMIN5 recognizes and delivers the small nuclear RNAs (snRNAs) to the SMN complex. Binds to the 7-methylguanosine cap of RNA molecules. This is Component of gems protein 5 (gemin5) from Dictyostelium discoideum (Social amoeba).